Here is a 227-residue protein sequence, read N- to C-terminus: uncharacterized protein (227 aa).

This is an uncharacterized protein from Schizosaccharomyces pombe (strain 972 / ATCC 24843) (Fission yeast).